Here is a 110-residue protein sequence, read N- to C-terminus: Defensin-like protein 296 (110 aa).

A signal peptide spans methionine 1–alanine 28. Disulfide bonds link cysteine 34/cysteine 52, cysteine 40/cysteine 57, cysteine 45/cysteine 59, cysteine 81/cysteine 102, cysteine 87/cysteine 107, and cysteine 95/cysteine 109.

This sequence belongs to the DEFL family.

The protein resides in the secreted. This is Defensin-like protein 296 from Arabidopsis thaliana (Mouse-ear cress).